Reading from the N-terminus, the 687-residue chain is Putative metabolite transport protein YDL199C (687 aa).

The disordered stretch occupies residues 1–22 (MKPPLNMSRSNKPLTQEANSSA). Topologically, residues 1–122 (MKPPLNMSRS…RHSSRVLRTS (122 aa)) are extracellular. The span at 7 to 22 (MSRSNKPLTQEANSSA) shows a compositional bias: polar residues. Ser90 carries the post-translational modification Phosphoserine. A helical transmembrane segment spans residues 123 to 143 (FISFVVLVSSLSGLDQGLISG). Over 144-164 (NVMTLSFQKYFHYPLTSPLGN) the chain is Cytoplasmic. Residues 165-185 (IVSIVNLGAFMASLFVYSGIL) form a helical membrane-spanning segment. The Extracellular portion of the chain corresponds to 186–192 (EPCSRKK). A helical transmembrane segment spans residues 193-213 (MLQISTMIYSLGAIVQVLALN). At 214–216 (QWC) the chain is on the cytoplasmic side. A helical transmembrane segment spans residues 217 to 237 (LLLGRFLLGVGMGFAFSMVII). The Extracellular portion of the chain corresponds to 238–251 (YQFEFPLPCIRKRT). Residues 252 to 272 (LISIQCVSSVIAYSFGIWINC) traverse the membrane as a helical segment. The Cytoplasmic portion of the chain corresponds to 273–283 (AFRYLGFAWRY). The helical transmembrane segment at 284 to 304 (PLSTHVALGIILNLMSFYLIL) threads the bilayer. Residues 305 to 410 (ESPSWLLKQK…MGRGERKSIY (106 aa)) are Extracellular-facing. Residues 411–431 (LTGLNALIYSIVILAYVPLVL) traverse the membrane as a helical segment. Over 432–439 (RKRKEKTN) the chain is Cytoplasmic. A helical membrane pass occupies residues 440-460 (VLLGSIVMCALLFTISFTDWF). At 461–469 (PKSTTRYIS) the chain is on the extracellular side. The helical transmembrane segment at 470-490 (ILFAVFLFTHFISWDSIGWVM) threads the bilayer. Topologically, residues 491 to 500 (TIELLPHLSQ) are cytoplasmic. A helical membrane pass occupies residues 501-521 (APVILLVSNFYWIFKWFVSLI). Topologically, residues 522 to 533 (TPILIDRLSWKF) are extracellular. Residues 534-554 (YLIPSLSSFISIIFVLKIFPI) form a helical membrane-spanning segment. Residues 555-687 (ETRDERLDSD…QNSPGDMAVA (133 aa)) lie on the Cytoplasmic side of the membrane. 2 disordered regions span residues 561-587 (LDSDDDSTGNGSGNHDDVFDDTGSEFS) and 654-687 (SFHNRTDPNISDNIAANKPSSGGGQNSPGDMAVA). The segment covering 660–673 (DPNISDNIAANKPS) has biased composition (polar residues).

Belongs to the major facilitator superfamily. Sugar transporter (TC 2.A.1.1) family.

The protein localises to the membrane. The sequence is that of Putative metabolite transport protein YDL199C from Saccharomyces cerevisiae (strain ATCC 204508 / S288c) (Baker's yeast).